The chain runs to 134 residues: ATP synthase epsilon chain (134 aa).

The protein belongs to the ATPase epsilon chain family. As to quaternary structure, F-type ATPases have 2 components, CF(1) - the catalytic core - and CF(0) - the membrane proton channel. CF(1) has five subunits: alpha(3), beta(3), gamma(1), delta(1), epsilon(1). CF(0) has three main subunits: a, b and c.

It is found in the cellular thylakoid membrane. In terms of biological role, produces ATP from ADP in the presence of a proton gradient across the membrane. This chain is ATP synthase epsilon chain, found in Prochlorococcus marinus (strain MIT 9301).